The following is a 157-amino-acid chain: Small heat shock protein ibp (157 aa).

The 114-residue stretch at E35 to P148 folds into the sHSP domain.

This sequence belongs to the small heat shock protein (HSP20) family.

The sequence is that of Small heat shock protein ibp (ibp) from Buchnera aphidicola subsp. Acyrthosiphon pisum (strain APS) (Acyrthosiphon pisum symbiotic bacterium).